Reading from the N-terminus, the 941-residue chain is RNA-directed RNA polymerase (941 aa).

Residues S875–P918 form a disordered region. Low complexity predominate over residues M905 to P918.

Forms a ribonucleoprotein complex with the 23S RNA, where a single polymerase molecule binds to a single viral RNA genome. Since the viral RNA is not encapsidated, ribonucleoprotein complex formation appears to be the strategy to survive in the host as persistent virus.

It localises to the host cytoplasm. The enzyme catalyses RNA(n) + a ribonucleoside 5'-triphosphate = RNA(n+1) + diphosphate. In terms of biological role, RNA-directed RNA polymerase that replicates the viral (+) and (-) genome. In Saccharomyces 23S RNA narnavirus (ScNV-23S), this protein is RNA-directed RNA polymerase.